The following is a 563-amino-acid chain: Pre-hexon-linking protein IIIa (563 aa).

Residues 1–117 (MRKRRTLTAP…ALLHRVSKYN (117 aa)) are peripentonal hexon-tethering domain. Residues 148-261 (GSLTALNSFL…FTDSVSISRD (114 aa)) are binding to hexon-linking protein. Position 235 is a phosphoserine; by host (S235). T284 is subject to Phosphothreonine; by host. A disordered region spans residues 449 to 471 (RTESRSVSRVPTPASSRRSSVAM). Residues S452 and S456 each carry the phosphoserine; by host modification. Low complexity predominate over residues 462 to 471 (ASSRRSSVAM). Phosphoserine; by host is present on residues S475 and S486. The tract at residues 524 to 543 (SSAISSDESDDGMSKPDKFL) is disordered. Residues 549–563 (GNPFAHLRPKLGRCL) constitute a propeptide that is removed on maturation.

Belongs to the adenoviridae hexon-linking protein IIIa family. As to quaternary structure, interacts with hexon proteins; this interaction tethers the peripentonal hexons to hexons situated in the facet. Interacts with the penton protein (via N-terminus). Interacts with packaging protein 3; this interaction is required to promote correct genome packaging. Cleaved near the C-terminus by the viral protease during virion maturation to form the mature protein.

It is found in the virion. The protein resides in the host nucleus. Structural component of the virion that acts as a cement protein on the capsid exterior which mediates the interactions between the hexons, including the peripentonal hexons, and reaches all the way to the penton vertices. Two hexon linking proteins IIIa, one from each facet, stabilize the unique edge interface between a pair of facets. As the virus enters the host cell, hexon linking proteins IIIa are shed concomitant with virion acidification in the endosome. During virus assembly, seems to play a role in the serotype specificity of the packaging of viral DNA via its interaction with packaging protein 3. The protein is Pre-hexon-linking protein IIIa of Canis lupus familiaris (Dog).